Consider the following 421-residue polypeptide: Serine hydroxymethyltransferase (421 aa).

(6S)-5,6,7,8-tetrahydrofolate is bound by residues leucine 121 and 125–127 (GHL). N6-(pyridoxal phosphate)lysine is present on lysine 229.

Belongs to the SHMT family. Homodimer. Pyridoxal 5'-phosphate serves as cofactor.

It localises to the cytoplasm. It catalyses the reaction (6R)-5,10-methylene-5,6,7,8-tetrahydrofolate + glycine + H2O = (6S)-5,6,7,8-tetrahydrofolate + L-serine. It functions in the pathway one-carbon metabolism; tetrahydrofolate interconversion. Its pathway is amino-acid biosynthesis; glycine biosynthesis; glycine from L-serine: step 1/1. In terms of biological role, catalyzes the reversible interconversion of serine and glycine with tetrahydrofolate (THF) serving as the one-carbon carrier. This reaction serves as the major source of one-carbon groups required for the biosynthesis of purines, thymidylate, methionine, and other important biomolecules. Also exhibits THF-independent aldolase activity toward beta-hydroxyamino acids, producing glycine and aldehydes, via a retro-aldol mechanism. The chain is Serine hydroxymethyltransferase from Actinobacillus pleuropneumoniae serotype 7 (strain AP76).